Reading from the N-terminus, the 605-residue chain is Proline--tRNA ligase (605 aa).

This sequence belongs to the class-II aminoacyl-tRNA synthetase family. ProS type 1 subfamily. Homodimer.

It localises to the cytoplasm. The enzyme catalyses tRNA(Pro) + L-proline + ATP = L-prolyl-tRNA(Pro) + AMP + diphosphate. Catalyzes the attachment of proline to tRNA(Pro) in a two-step reaction: proline is first activated by ATP to form Pro-AMP and then transferred to the acceptor end of tRNA(Pro). As ProRS can inadvertently accommodate and process non-cognate amino acids such as alanine and cysteine, to avoid such errors it has two additional distinct editing activities against alanine. One activity is designated as 'pretransfer' editing and involves the tRNA(Pro)-independent hydrolysis of activated Ala-AMP. The other activity is designated 'posttransfer' editing and involves deacylation of mischarged Ala-tRNA(Pro). The misacylated Cys-tRNA(Pro) is not edited by ProRS. The protein is Proline--tRNA ligase of Bifidobacterium adolescentis (strain ATCC 15703 / DSM 20083 / NCTC 11814 / E194a).